A 225-amino-acid polypeptide reads, in one-letter code: UPF0758 protein XAC3915 (225 aa).

Residues 102–224 (ALSDPPSVGR…PVSFAERGWL (123 aa)) enclose the MPN domain. Zn(2+) contacts are provided by H173, H175, and D186. A JAMM motif motif is present at residues 173-186 (HNHPSGNPEPSEAD).

Belongs to the UPF0758 family.

This is UPF0758 protein XAC3915 from Xanthomonas axonopodis pv. citri (strain 306).